The chain runs to 101 residues: Threonine-rich inner membrane protein GfcA (101 aa).

Positions 1 to 21 are cleaved as a signal peptide; that stretch reads MKHKLSAILMAFMLTTPAAFA. Over 22–59 the chain is Cytoplasmic; sequence APEATNGTEATTGTTGTTTTTTGATTTATTTGGVAAGA. The interval 24 to 45 is disordered; it reads EATNGTEATTGTTGTTTTTTGA. The chain crosses the membrane as a helical span at residues 60–80; it reads VGTATVVGVATAVGVATLAVV. Residues 81–101 lie on the Periplasmic side of the membrane; it reads AANDSGDGGSHNTSTTTSTTR. The segment at 82 to 101 is disordered; it reads ANDSGDGGSHNTSTTTSTTR.

It localises to the cell inner membrane. The sequence is that of Threonine-rich inner membrane protein GfcA (gfcA) from Escherichia coli (strain K12).